A 132-amino-acid chain; its full sequence is Evasin P985 (132 aa).

Positions methionine 1 to threonine 24 are cleaved as a signal peptide. Asparagine 45, asparagine 69, asparagine 74, asparagine 103, asparagine 111, and asparagine 117 each carry an N-linked (GlcNAc...) asparagine glycan. Disulfide bonds link cysteine 48-cysteine 70, cysteine 66-cysteine 109, cysteine 83-cysteine 114, and cysteine 104-cysteine 123.

The protein localises to the secreted. Salivary chemokine-binding protein which binds to host chemokine CCL5. The sequence is that of Evasin P985 from Amblyomma parvum (South American tick).